The following is a 392-amino-acid chain: Na(+)/H(+) antiporter NhaA (392 aa).

The next 11 helical transmembrane spans lie at 16-36 (ILLI…LSAA), 58-78 (LLLW…GLEV), 93-113 (ITLP…IFIL), 124-144 (GWAI…SLLG), 153-173 (IFLM…IALF), 176-196 (TDLS…LFIM), 199-219 (MDVA…VSVL), 257-277 (DLHY…NAGV), 295-315 (VMLG…WLAI), 328-348 (WMML…SLFV), and 362-382 (ADKL…YLIL).

The protein belongs to the NhaA Na(+)/H(+) (TC 2.A.33) antiporter family.

The protein resides in the cell inner membrane. The catalysed reaction is Na(+)(in) + 2 H(+)(out) = Na(+)(out) + 2 H(+)(in). Na(+)/H(+) antiporter that extrudes sodium in exchange for external protons. The chain is Na(+)/H(+) antiporter NhaA from Sulfurovum sp. (strain NBC37-1).